The chain runs to 120 residues: Large ribosomal subunit protein uL18 (120 aa).

Belongs to the universal ribosomal protein uL18 family. Part of the 50S ribosomal subunit; part of the 5S rRNA/L5/L18/L25 subcomplex. Contacts the 5S and 23S rRNAs.

Functionally, this is one of the proteins that bind and probably mediate the attachment of the 5S RNA into the large ribosomal subunit, where it forms part of the central protuberance. This Agrobacterium fabrum (strain C58 / ATCC 33970) (Agrobacterium tumefaciens (strain C58)) protein is Large ribosomal subunit protein uL18.